Consider the following 192-residue polypeptide: UPF0312 protein Ent638_1570 (192 aa).

The signal sequence occupies residues 1 to 22 (MKKRLLGIALGSLLFTTGSAVA).

This sequence belongs to the UPF0312 family. Type 1 subfamily.

The protein resides in the periplasm. This is UPF0312 protein Ent638_1570 from Enterobacter sp. (strain 638).